The sequence spans 394 residues: Mannosyl-3-phosphoglycerate synthase (394 aa).

The protein belongs to the glycosyltransferase 2 family.

It localises to the cytoplasm. The enzyme catalyses (2R)-3-phosphoglycerate + GDP-alpha-D-mannose = 2-O-(alpha-D-mannosyl)-3-phosphoglycerate + GDP + H(+). It participates in carbohydrate biosynthesis; 2-(alpha-D-mannosyl)-D-glycerate biosynthesis; 2-(alpha-D-mannosyl)-D-glycerate from GDP-alpha-D-mannose (MPG route): step 1/2. In terms of biological role, transfers a mannosyl group from GDP-mannose to phosphoglycerate to form mannosyl-3-phosphoglycerate (MPG). The protein is Mannosyl-3-phosphoglycerate synthase (mngA) of Pyrococcus abyssi (strain GE5 / Orsay).